The following is a 194-amino-acid chain: NADH-quinone oxidoreductase subunit B (194 aa).

Polar residues predominate over residues 1–11; the sequence is MGMSQNNSTLV. The tract at residues 1–22 is disordered; that stretch reads MGMSQNNSTLVAPQPKGIIDPA. The [4Fe-4S] cluster site is built by Cys72, Cys73, Cys138, and Cys168.

It belongs to the complex I 20 kDa subunit family. As to quaternary structure, NDH-1 is composed of 14 different subunits. Subunits NuoB, C, D, E, F, and G constitute the peripheral sector of the complex. The cofactor is [4Fe-4S] cluster.

It localises to the cell inner membrane. It carries out the reaction a quinone + NADH + 5 H(+)(in) = a quinol + NAD(+) + 4 H(+)(out). NDH-1 shuttles electrons from NADH, via FMN and iron-sulfur (Fe-S) centers, to quinones in the respiratory chain. The immediate electron acceptor for the enzyme in this species is believed to be ubiquinone. Couples the redox reaction to proton translocation (for every two electrons transferred, four hydrogen ions are translocated across the cytoplasmic membrane), and thus conserves the redox energy in a proton gradient. In Agrobacterium fabrum (strain C58 / ATCC 33970) (Agrobacterium tumefaciens (strain C58)), this protein is NADH-quinone oxidoreductase subunit B.